The sequence spans 486 residues: Glutamyl-tRNA(Gln) amidotransferase subunit A (486 aa).

Residues lysine 75 and serine 150 each act as charge relay system in the active site. Serine 174 functions as the Acyl-ester intermediate in the catalytic mechanism.

The protein belongs to the amidase family. GatA subfamily. In terms of assembly, heterotrimer of A, B and C subunits.

It catalyses the reaction L-glutamyl-tRNA(Gln) + L-glutamine + ATP + H2O = L-glutaminyl-tRNA(Gln) + L-glutamate + ADP + phosphate + H(+). Allows the formation of correctly charged Gln-tRNA(Gln) through the transamidation of misacylated Glu-tRNA(Gln) in organisms which lack glutaminyl-tRNA synthetase. The reaction takes place in the presence of glutamine and ATP through an activated gamma-phospho-Glu-tRNA(Gln). The sequence is that of Glutamyl-tRNA(Gln) amidotransferase subunit A from Nostoc punctiforme (strain ATCC 29133 / PCC 73102).